The following is a 452-amino-acid chain: GTPase Der (452 aa).

EngA-type G domains are found at residues 9 to 170 and 185 to 362; these read KIIA…PEED and LQIV…KTWN. GTP contacts are provided by residues 15 to 22, 62 to 66, 124 to 127, 191 to 198, 238 to 242, and 303 to 306; these read GRPNVGKS, DTPGL, NKCE, GRPNAGKS, DTAGL, and NKWD. Residues 363–448 enclose the KH-like domain; it reads KKITTSKLNE…PIRFNYIKTK (86 aa).

Belongs to the TRAFAC class TrmE-Era-EngA-EngB-Septin-like GTPase superfamily. EngA (Der) GTPase family. Associates with the 50S ribosomal subunit.

Functionally, GTPase that plays an essential role in the late steps of ribosome biogenesis. The polypeptide is GTPase Der (Rickettsia bellii (strain RML369-C)).